A 167-amino-acid chain; its full sequence is Probable chemoreceptor glutamine deamidase CheD (167 aa).

It belongs to the CheD family.

It catalyses the reaction L-glutaminyl-[protein] + H2O = L-glutamyl-[protein] + NH4(+). Its function is as follows. Probably deamidates glutamine residues to glutamate on methyl-accepting chemotaxis receptors (MCPs), playing an important role in chemotaxis. This Moorella thermoacetica (strain ATCC 39073 / JCM 9320) protein is Probable chemoreceptor glutamine deamidase CheD.